The sequence spans 124 residues: Small ribosomal subunit protein uS12 (124 aa).

The residue at position 89 (aspartate 89) is a 3-methylthioaspartic acid. Residues 103 to 124 are disordered; sequence DTAGVKDRRQGRSKYGAKRPKD. Positions 113 to 124 are enriched in basic residues; the sequence is GRSKYGAKRPKD.

This sequence belongs to the universal ribosomal protein uS12 family. In terms of assembly, part of the 30S ribosomal subunit. Contacts proteins S8 and S17. May interact with IF1 in the 30S initiation complex.

With S4 and S5 plays an important role in translational accuracy. In terms of biological role, interacts with and stabilizes bases of the 16S rRNA that are involved in tRNA selection in the A site and with the mRNA backbone. Located at the interface of the 30S and 50S subunits, it traverses the body of the 30S subunit contacting proteins on the other side and probably holding the rRNA structure together. The combined cluster of proteins S8, S12 and S17 appears to hold together the shoulder and platform of the 30S subunit. The protein is Small ribosomal subunit protein uS12 of Acaryochloris marina (strain MBIC 11017).